The sequence spans 124 residues: Small ribosomal subunit protein uS13 (124 aa).

The segment at 94-124 is disordered; it reads GLPLRGQRTKNNSRTRKGKRKTVANKKKATK. Residues 100–124 show a composition bias toward basic residues; that stretch reads QRTKNNSRTRKGKRKTVANKKKATK.

This sequence belongs to the universal ribosomal protein uS13 family. In terms of assembly, part of the 30S ribosomal subunit. Forms a loose heterodimer with protein S19. Forms two bridges to the 50S subunit in the 70S ribosome.

Its function is as follows. Located at the top of the head of the 30S subunit, it contacts several helices of the 16S rRNA. In the 70S ribosome it contacts the 23S rRNA (bridge B1a) and protein L5 of the 50S subunit (bridge B1b), connecting the 2 subunits; these bridges are implicated in subunit movement. Contacts the tRNAs in the A and P-sites. This Flavobacterium psychrophilum (strain ATCC 49511 / DSM 21280 / CIP 103535 / JIP02/86) protein is Small ribosomal subunit protein uS13.